The chain runs to 309 residues: DSC E3 ubiquitin ligase complex subunit C (309 aa).

The N-linked (GlcNAc...) asparagine glycan is linked to asparagine 61. 2 disordered regions span residues 88-110 (LPPS…GKGK) and 148-177 (EQAD…FDRL). Helical transmembrane passes span 257-277 (DDML…AMWL) and 289-309 (GLAV…RIMN).

The protein belongs to the dsc3 family. In terms of assembly, component of the DSC E3 ubiquitin ligase complex composed of dscA, dscB, dscC and dscD.

Its subcellular location is the endoplasmic reticulum membrane. The protein operates within protein modification; protein ubiquitination. In terms of biological role, component of the DSC E3 ubiquitin ligase complex which is required for the srbA transcriptional activator proteolytic cleavage to release the soluble transcription factor from the membrane in low oxygen or sterol conditions. Required for growth during hypoxia and triazole drug susceptibility, as well as for virulence in a murine model of invasive pulmonary aspergillosis (IPA). In Aspergillus fumigatus (strain ATCC MYA-4609 / CBS 101355 / FGSC A1100 / Af293) (Neosartorya fumigata), this protein is DSC E3 ubiquitin ligase complex subunit C.